Here is a 495-residue protein sequence, read N- to C-terminus: UDP-N-acetylmuramoyl-L-alanyl-D-glutamate--2,6-diaminopimelate ligase (495 aa).

Residues Leu-27, Ser-29, and 44-46 (HQA) contribute to the UDP-N-acetyl-alpha-D-muramoyl-L-alanyl-D-glutamate site. Residue 116-122 (GTNGKTT) coordinates ATP. UDP-N-acetyl-alpha-D-muramoyl-L-alanyl-D-glutamate contacts are provided by residues Asn-157, 158–159 (TT), Ser-185, Gln-191, and Arg-193. N6-carboxylysine is present on Lys-225. Meso-2,6-diaminopimelate-binding positions include Arg-390, 414-417 (DNPR), Gly-465, and Glu-469. Positions 414–417 (DNPR) match the Meso-diaminopimelate recognition motif motif.

This sequence belongs to the MurCDEF family. MurE subfamily. The cofactor is Mg(2+). Carboxylation is probably crucial for Mg(2+) binding and, consequently, for the gamma-phosphate positioning of ATP.

It localises to the cytoplasm. The catalysed reaction is UDP-N-acetyl-alpha-D-muramoyl-L-alanyl-D-glutamate + meso-2,6-diaminopimelate + ATP = UDP-N-acetyl-alpha-D-muramoyl-L-alanyl-gamma-D-glutamyl-meso-2,6-diaminopimelate + ADP + phosphate + H(+). The protein operates within cell wall biogenesis; peptidoglycan biosynthesis. Catalyzes the addition of meso-diaminopimelic acid to the nucleotide precursor UDP-N-acetylmuramoyl-L-alanyl-D-glutamate (UMAG) in the biosynthesis of bacterial cell-wall peptidoglycan. This is UDP-N-acetylmuramoyl-L-alanyl-D-glutamate--2,6-diaminopimelate ligase from Salmonella choleraesuis (strain SC-B67).